Reading from the N-terminus, the 371-residue chain is Chaperone protein DnaJ (371 aa).

The region spanning 5-69 is the J domain; it reads DYYEVLGLSK…QKRAQYDQFG (65 aa). Residues 133-215 form a CR-type zinc finger; that stretch reads GKELNVEIPV…CHGSGKVRKR (83 aa). Cys146, Cys149, Cys163, Cys166, Cys189, Cys192, Cys203, and Cys206 together coordinate Zn(2+). CXXCXGXG motif repeat units lie at residues 146-153, 163-170, 189-196, and 203-210; these read CDTCKGSG, CKHCSGSG, CSHCSGTG, and CTTCHGSG.

This sequence belongs to the DnaJ family. Homodimer. Zn(2+) is required as a cofactor.

The protein resides in the cytoplasm. In terms of biological role, participates actively in the response to hyperosmotic and heat shock by preventing the aggregation of stress-denatured proteins and by disaggregating proteins, also in an autonomous, DnaK-independent fashion. Unfolded proteins bind initially to DnaJ; upon interaction with the DnaJ-bound protein, DnaK hydrolyzes its bound ATP, resulting in the formation of a stable complex. GrpE releases ADP from DnaK; ATP binding to DnaK triggers the release of the substrate protein, thus completing the reaction cycle. Several rounds of ATP-dependent interactions between DnaJ, DnaK and GrpE are required for fully efficient folding. Also involved, together with DnaK and GrpE, in the DNA replication of plasmids through activation of initiation proteins. In Bacillus anthracis (strain A0248), this protein is Chaperone protein DnaJ.